The primary structure comprises 93 residues: CRISPR-associated endoribonuclease Cas2 (93 aa).

Asp8 is a Mg(2+) binding site.

Belongs to the CRISPR-associated endoribonuclease Cas2 protein family. In terms of assembly, homodimer, forms a heterotetramer with a Cas1 homodimer. Mg(2+) is required as a cofactor.

CRISPR (clustered regularly interspaced short palindromic repeat), is an adaptive immune system that provides protection against mobile genetic elements (viruses, transposable elements and conjugative plasmids). CRISPR clusters contain sequences complementary to antecedent mobile elements and target invading nucleic acids. CRISPR clusters are transcribed and processed into CRISPR RNA (crRNA). Functions as a ssRNA-specific endoribonuclease. Involved in the integration of spacer DNA into the CRISPR cassette. The protein is CRISPR-associated endoribonuclease Cas2 of Thermofilum pendens (strain DSM 2475 / Hrk 5).